The sequence spans 448 residues: tRNA-2-methylthio-N(6)-dimethylallyladenosine synthase (448 aa).

The region spanning 7–123 (RSFYIHTFGC…LPALIGDAEE (117 aa)) is the MTTase N-terminal domain. 6 residues coordinate [4Fe-4S] cluster: Cys-16, Cys-52, Cys-86, Cys-159, Cys-163, and Cys-166. One can recognise a Radical SAM core domain in the interval 145–375 (REVGVGAFVP…IDLQLSISAE (231 aa)). In terms of domain architecture, TRAM spans 378 to 441 (QEAVGSVVDV…SATLTGVNQG (64 aa)).

The protein belongs to the methylthiotransferase family. MiaB subfamily. In terms of assembly, monomer. [4Fe-4S] cluster is required as a cofactor.

The protein resides in the cytoplasm. It carries out the reaction N(6)-dimethylallyladenosine(37) in tRNA + (sulfur carrier)-SH + AH2 + 2 S-adenosyl-L-methionine = 2-methylsulfanyl-N(6)-dimethylallyladenosine(37) in tRNA + (sulfur carrier)-H + 5'-deoxyadenosine + L-methionine + A + S-adenosyl-L-homocysteine + 2 H(+). Its function is as follows. Catalyzes the methylthiolation of N6-(dimethylallyl)adenosine (i(6)A), leading to the formation of 2-methylthio-N6-(dimethylallyl)adenosine (ms(2)i(6)A) at position 37 in tRNAs that read codons beginning with uridine. In Chlorobium phaeovibrioides (strain DSM 265 / 1930) (Prosthecochloris vibrioformis (strain DSM 265)), this protein is tRNA-2-methylthio-N(6)-dimethylallyladenosine synthase.